The following is a 590-amino-acid chain: Peroxisomal targeting signal receptor (590 aa).

C6 is covalently cross-linked (Glycyl cysteine thioester (Cys-Gly) (interchain with G-Cter in ubiquitin)). Positions 7-29 (SVGSNPLAQLNKHAQGQGSSLSN) are amphipathic helix 1 (AH1). K18 is covalently cross-linked (Glycyl lysine isopeptide (Lys-Gly) (interchain with G-Cter in ubiquitin)). The span at 18 to 30 (KHAQGQGSSLSNT) shows a compositional bias: polar residues. The disordered stretch occupies residues 18 to 45 (KHAQGQGSSLSNTHVRHSGGVSGSNVFR). An amphipathic helix 2 (AH2) region spans residues 56–74 (RQQLNSFMSQPMRLGEDKM). 3 consecutive short sequence motifs (wxxxF/Y motif) follow at residues 108–112 (WTREF), 139–143 (WKFRY), and 178–182 (WNDKF). An amphipathic helix 4 (AH4) region spans residues 227–243 (FQEVWDSIQQDTEEMLS). 5 TPR repeats span residues 285 to 319 (NPNA…DPKH), 320 to 353 (VDAW…DPNN), 424 to 457 (PDIQ…NPND), 459 to 491 (LMWN…KPSF), and 493 to 525 (RARY…HDVE).

The protein belongs to the peroxisomal targeting signal receptor family. Interacts (via WxxxF/Y and LVxEF motifs) with PEX14; promoting translocation through the PEX13-PEX14 docking complex. Monoubiquitinated at Cys-6 by PEX2 during PEX5 passage through the retrotranslocation channel: monoubiquitination acts as a signal for PEX5 extraction and is required for proper export from peroxisomes and recycling. When PEX5 recycling is compromised, polyubiquitinated at Lys-18 by PEX10 during its passage through the retrotranslocation channel, leading to its degradation.

Its subcellular location is the cytoplasm. The protein localises to the cytosol. It is found in the peroxisome matrix. Functionally, receptor that mediates peroxisomal import of proteins containing a C-terminal PTS1-type tripeptide peroxisomal targeting signal (SKL-type). Binds to cargo proteins containing a PTS1 peroxisomal targeting signal in the cytosol, and translocates them into the peroxisome matrix by passing through the PEX13-PEX14 docking complex along with cargo proteins. PEX5 receptor is then retrotranslocated into the cytosol, leading to release of bound cargo in the peroxisome matrix, and reset for a subsequent peroxisome import cycle. In Candida glabrata (strain ATCC 2001 / BCRC 20586 / JCM 3761 / NBRC 0622 / NRRL Y-65 / CBS 138) (Yeast), this protein is Peroxisomal targeting signal receptor (PEX5).